We begin with the raw amino-acid sequence, 185 residues long: UPF0301 protein Tbd_2579 (185 aa).

Belongs to the UPF0301 (AlgH) family.

The polypeptide is UPF0301 protein Tbd_2579 (Thiobacillus denitrificans (strain ATCC 25259 / T1)).